A 179-amino-acid polypeptide reads, in one-letter code: Large ribosomal subunit protein uL5 (179 aa).

It belongs to the universal ribosomal protein uL5 family. As to quaternary structure, part of the 50S ribosomal subunit; part of the 5S rRNA/L5/L18/L25 subcomplex. Contacts the 5S rRNA and the P site tRNA. Forms a bridge to the 30S subunit in the 70S ribosome.

Its function is as follows. This is one of the proteins that bind and probably mediate the attachment of the 5S RNA into the large ribosomal subunit, where it forms part of the central protuberance. In the 70S ribosome it contacts protein S13 of the 30S subunit (bridge B1b), connecting the 2 subunits; this bridge is implicated in subunit movement. Contacts the P site tRNA; the 5S rRNA and some of its associated proteins might help stabilize positioning of ribosome-bound tRNAs. This is Large ribosomal subunit protein uL5 from Azotobacter vinelandii (strain DJ / ATCC BAA-1303).